The sequence spans 287 residues: Iodotyrosine deiodinase (287 aa).

A helical membrane pass occupies residues 15 to 34 (HWPSLFITLALIWIVKRLFF). FMN contacts are provided by residues 96-100 (RRSIR), serine 125, and 125-126 (SG). 3,5-diiodo-L-tyrosine contacts are provided by alanine 127, glutamate 154, tyrosine 158, and lysine 179. 3-iodo-L-tyrosine-binding residues include alanine 127, glutamate 154, tyrosine 158, and lysine 179. FMN-binding positions include 235-237 (VTT) and arginine 277.

This sequence belongs to the nitroreductase family. Homodimer. The cofactor is FMN. In terms of tissue distribution, expressed in spermatocytes.

The protein localises to the cell membrane. The enzyme catalyses 2 iodide + L-tyrosine + 2 NADP(+) = 3,5-diiodo-L-tyrosine + 2 NADPH + H(+). It carries out the reaction iodide + L-tyrosine + NADP(+) = 3-iodo-L-tyrosine + NADPH. The catalysed reaction is 3-iodo-L-tyrosine + iodide + NADP(+) = 3,5-diiodo-L-tyrosine + NADPH + H(+). It catalyses the reaction L-tyrosine + chloride + NADP(+) = 3-chloro-L-tyrosine + NADPH. The enzyme catalyses bromide + L-tyrosine + NADP(+) = 3-bromo-L-tyrosine + NADPH. Its function is as follows. Catalyzes the dehalogenation of halotyrosines such as 3-bromo-L-tyrosine, 3-chloro-L-tyrosine, 3-iodo-L-tyrosine and 3,5-diiodo-L-tyrosine. Activity towards 3-fluoro-L-tyrosine is weak. Important for male and female fertility. May be involved in maintaining the viability of sperm, both during development in the testes and storage in the female spermatheca. This chain is Iodotyrosine deiodinase, found in Drosophila melanogaster (Fruit fly).